The following is a 552-amino-acid chain: Ribosomal lysine N-methyltransferase 3 (552 aa).

In terms of domain architecture, SET spans 26–335 (SKCDIRESPL…QGQEIFNSYG (310 aa)). An S-adenosyl-L-methionine-binding site is contributed by Tyr-334. The segment at 399–432 (EDEEDEDGQAKSDNLSDDIESEEEEEEEEGDDSL) is disordered. Residues 413-432 (LSDDIESEEEEEEEEGDDSL) show a composition bias toward acidic residues.

It belongs to the class V-like SAM-binding methyltransferase superfamily.

It localises to the nucleus. S-adenosyl-L-methionine-dependent protein-lysine N-methyltransferase that monomethylates 60S ribosomal protein L42 (RPL42A and RPL42B) at 'Lys-40'. The protein is Ribosomal lysine N-methyltransferase 3 of Saccharomyces cerevisiae (strain ATCC 204508 / S288c) (Baker's yeast).